Reading from the N-terminus, the 489-residue chain is 3-octaprenyl-4-hydroxybenzoate carboxy-lyase (489 aa).

Residue Asn-172 coordinates Mn(2+). Prenylated FMN contacts are provided by residues 175-177 (IYR), 189-191 (RWL), and 194-195 (RG). Mn(2+) is bound at residue Glu-238. Asp-287 functions as the Proton donor in the catalytic mechanism.

Belongs to the UbiD family. Homohexamer. Prenylated FMN serves as cofactor. Mn(2+) is required as a cofactor.

It localises to the cell membrane. It catalyses the reaction a 4-hydroxy-3-(all-trans-polyprenyl)benzoate + H(+) = a 2-(all-trans-polyprenyl)phenol + CO2. It functions in the pathway cofactor biosynthesis; ubiquinone biosynthesis. Its function is as follows. Catalyzes the decarboxylation of 3-octaprenyl-4-hydroxy benzoate to 2-octaprenylphenol, an intermediate step in ubiquinone biosynthesis. The sequence is that of 3-octaprenyl-4-hydroxybenzoate carboxy-lyase from Tolumonas auensis (strain DSM 9187 / NBRC 110442 / TA 4).